Consider the following 326-residue polypeptide: Endochitinase (326 aa).

The first 25 residues, 1-25 (MVYCTASLPLLLLLLVGLLAGEAFA), serve as a signal peptide directing secretion. Positions 26–66 (EQCGRQAGGALCPGGLCCSQFGWCGSTSDYCGPTCQSQCGG) constitute a Chitin-binding type-1 domain. Disulfide bonds link Cys-28-Cys-43, Cys-37-Cys-49, Cys-42-Cys-56, Cys-60-Cys-64, Cys-96-Cys-158, Cys-170-Cys-178, and Cys-277-Cys-309. Catalysis depends on Glu-140, which acts as the Proton donor.

This sequence belongs to the glycosyl hydrolase 19 family. Chitinase class I subfamily. In terms of tissue distribution, expressed in the pulp of the fruit (at protein level). Expressed in mesocarp (at protein level).

The catalysed reaction is Random endo-hydrolysis of N-acetyl-beta-D-glucosaminide (1-&gt;4)-beta-linkages in chitin and chitodextrins.. Defense against chitin-containing fungal pathogens. Has in vitro antifungal activity against F.oxysporum inhibiting its growth and the branching of its hyphae. Has endochitinase activity, but no exochitinase or lysozyme activities. This chain is Endochitinase, found in Persea americana (Avocado).